The following is a 473-amino-acid chain: Spliceosome-associated protein CWC27 homolog (473 aa).

Position 2 is an N-acetylserine (Ser-2). Positions 11-166 constitute a PPIase cyclophilin-type domain; that stretch reads TNGKVLLKTT…NPHKIKSCEV (156 aa). Positions 177 to 193 are enriched in basic and acidic residues; sequence REIKRPKKEKPEEEVKK. 2 disordered regions span residues 177-386 and 399-473; these read REIK…EDQT and QAIA…KERR. Residues 206 to 230 adopt a coiled-coil conformation; sequence SFGEEAEEEEEEVNRVSQSMKGKSK. Residues 231-241 are compositionally biased toward basic and acidic residues; it reads SSHDLLKDDPH. Positions 257-266 are enriched in acidic residues; that stretch reads GDLDDGGEGE. Basic and acidic residues-rich tracts occupy residues 267–287, 305–348, and 360–372; these read SAEHDEYIDGDEKNLMRERIA, EVEK…KRSE, and EYRREKQKYEALR. Positions 305–378 form a coiled coil; the sequence is EVEKKSVNRS…EALRKQQSKK (74 aa). Ser-347 is subject to Phosphoserine. Positions 405–419 are enriched in acidic residues; it reads PENDIPETEVEDDEG. Composition is skewed to basic and acidic residues over residues 426–438 and 458–473; these read QFEDKSRKVKDAS and RREESKKLMREKKERR.

The protein belongs to the cyclophilin-type PPIase family. As to quaternary structure, part of the activated spliceosome B/catalytic step 1 spliceosome, one of the forms of the spliceosome which has a well-formed active site but still cannot catalyze the branching reaction and is composed at least of 52 proteins, the U2, U5 and U6 snRNAs and the pre-mRNA. Recruited during early steps of activated spliceosome B maturation, it is probably one of the first proteins released from this complex as he matures to the spliceosome C complex. Component of the minor spliceosome, which splices U12-type introns.

It is found in the nucleus. As part of the spliceosome, plays a role in pre-mRNA splicing. Probable inactive PPIase with no peptidyl-prolyl cis-trans isomerase activity. As a component of the minor spliceosome, involved in the splicing of U12-type introns in pre-mRNAs. In Pongo abelii (Sumatran orangutan), this protein is Spliceosome-associated protein CWC27 homolog.